The following is a 1482-amino-acid chain: Chromosome partition protein MukB (1482 aa).

34-41 (GGNGAGKS) contributes to the ATP binding site. Coiled coils occupy residues 326-416 (LEAD…AIQY), 509-603 (RHLA…RAPV), 780-805 (RAARENRIESLHAERETLSERFATLS), 835-923 (EAEI…AKLE), 979-1116 (LSGN…AKAG), and 1210-1265 (EAIE…LQSV). The segment at 666–783 (PGGAEDSRLN…TLPLFGRAAR (118 aa)) is flexible hinge.

It belongs to the SMC family. MukB subfamily. As to quaternary structure, homodimerization via its hinge domain. Binds to DNA via its C-terminal region. Interacts, and probably forms a ternary complex, with MukE and MukF via its C-terminal region. The complex formation is stimulated by calcium or magnesium. Interacts with tubulin-related protein FtsZ.

Its subcellular location is the cytoplasm. It localises to the nucleoid. Plays a central role in chromosome condensation, segregation and cell cycle progression. Functions as a homodimer, which is essential for chromosome partition. Involved in negative DNA supercoiling in vivo, and by this means organize and compact chromosomes. May achieve or facilitate chromosome segregation by condensation DNA from both sides of a centrally located replisome during cell division. The protein is Chromosome partition protein MukB of Enterobacter sp. (strain 638).